Consider the following 158-residue polypeptide: Small ribosomal subunit protein uS7 (158 aa).

This sequence belongs to the universal ribosomal protein uS7 family. In terms of assembly, part of the 30S ribosomal subunit. Contacts proteins S9 and S11.

Functionally, one of the primary rRNA binding proteins, it binds directly to 16S rRNA where it nucleates assembly of the head domain of the 30S subunit. Is located at the subunit interface close to the decoding center, probably blocks exit of the E-site tRNA. This chain is Small ribosomal subunit protein uS7, found in Phocaeicola vulgatus (strain ATCC 8482 / DSM 1447 / JCM 5826 / CCUG 4940 / NBRC 14291 / NCTC 11154) (Bacteroides vulgatus).